Here is a 132-residue protein sequence, read N- to C-terminus: Large ribosomal subunit protein uL14 (132 aa).

Belongs to the universal ribosomal protein uL14 family. In terms of assembly, part of the 50S ribosomal subunit. Forms a cluster with proteins L3 and L24e, part of which may contact the 16S rRNA in 2 intersubunit bridges.

Its function is as follows. Binds to 23S rRNA. Forms part of two intersubunit bridges in the 70S ribosome. The chain is Large ribosomal subunit protein uL14 from Methanococcus aeolicus (strain ATCC BAA-1280 / DSM 17508 / OCM 812 / Nankai-3).